Consider the following 1684-residue polypeptide: MEGLLAGGLAAPDHPRGPAPREDIESGAEAAEGEGDIFPSSHYLPITKEGPRDILDGRSGISDGQPHPGLSEALPRATSATHRISSCYWDGDSLDFQPGSPPPHLLGPFPASLDVQGSWEHPMVQEAREGTPSEQRFKDSVIVRTMKPYAKLKGSRKFLHHQGEVKFLEKYSPSHHKFDWLQDTDEQGPLKDTGLHLDLPAQPPTVTSFRRVIVPVDNTPKTLDMEVMGTREDLEDFGQVAQPSEWGLHTSASEVATQTWTVNSEASVERLQPLLSPVQTGPYLCELLQEVAGGVDSNEEEEEEPAVFPCIECSIYFKHKEHLLEHMSQHRRAPGQEPPADLAPLACSECGWAFTEPTALEQHWQLHQASREKIIEEIQKLKQFPGDEGREARLQCSKCVFGTNSSRAFMQHAKLHVRGSLPSRQATEPFRGGSPVLDVSTLVYPSYGDSSGLNTCVHCGFTAPSKSLLREHTRLVHAHHAHWEEVGEAFEDLTSQPCTSQDAYTHSPDTATVDYFSKSEPLLASVWQENPSGYDPDLAFGPDYQQPGMRNFPLLNSGQQSLGKLAFPSPMASASYSIQRNRNKSTVHLQRMEDKSHLWSEEEEEEDEDVVLTSERDFTPENGAFPPLAIPSLIPQPALELKQTFQDALQAVDASETQQQQLQGMVPIVLMAKLRPQVIAATTRASPQLPPEEPELRSTHPLDFLLLDAPLGGSLGLNTLLEGDPAMALKHEERKCPYCPDRFHYGIGLANHVRGHLNRVGVSYNVRHFISAEEVKAIERRFSFQKKKKKVANFDPGTFSLMRCDFCGAGFDTRAGLSSHARAHLRDFGITNWELTISPINILQELLATSAAELPPSPLGREPGGPPRSFLTSRRPRLPLTMPFPPTWAEDPGPIYGDAQSLTTCEVCGACFETRKGLSSHARSHLRQLGVAESESSGAPIDLLYELVKQKGLPDAPLGLTPSLTKKSNSPKEFLAGAARPGLLTLAKPMDAPAVNKAIKSPPGFSAKGLTHPSSSPLLKKAPLTLAGSPTPKNPEDKSPQLSLSPRPTSPKAQWPQSEDEGPLNLTSGPEPTRDIRCEFCGEFFENRKGLSSHARSHLRQMGVTEWYVNGSPIDTLREILKRRTQSRPGGHLHPPGPSPKALAKVLSTGGPGSSLEARSPSDLHISPLTKKLPPPPGSPLGHSPTASPPPTARKMFSGLATPSLPKKLKPEHMRVEIKREMLPGTLHGEPHPSEGPWGTPREDMAPLNLSARAEPVRDIRCEFCGEFFENRKGLSSHARSHLRQMGVTEWSVNGSPIDTLREILKKKSKLCLIKKEPPAGDLAPALTEDGSPTAAPGALHSPLPLSPLASRPGKPGAGPTQVPRELSLSPITGSKPSAASYLGPVATKRPLQEDRFLPAEVKAKTYIQTELPFKAKTLHEKTSHSSTEACCELCGLYFENRKALASHARAHLRQFGVTEWCVNGSPIETLSEWIKHRPQKVGAYRSYIQGGRPFTKKFRSAGHGRDSDKRPPLGLAPGGLSLVGRSAGGEPGLEAGRAADSGERPLATSPPGTVKSEEHQRQNINKFERRQARPSDASAARGGEEVNDLQQKLEEVRQPPPRVRPVPSLVPRPPQTSLVKFVGNIYTLKCRFCEVEFQGPLSIQEEWVRHLQRHILEMNFSKADPPPEEPQAPQAQTAAVEAP.

The interval 1-77 is disordered; sequence MEGLLAGGLA…PGLSEALPRA (77 aa). Over residues 13 to 24 the composition is skewed to basic and acidic residues; sequence DHPRGPAPREDI. 5 consecutive C2H2-type zinc fingers follow at residues 308–330, 345–367, 454–477, 734–756, and 802–824; these read FPCI…MSQH, LACS…WQLH, NTCV…RLVH, RKCP…VRGH, and MRCD…ARAH. The interval 854 to 876 is disordered; sequence LPPSPLGREPGGPPRSFLTSRRP. The segment at 903–925 adopts a C2H2-type 6 zinc-finger fold; it reads TTCEVCGACFETRKGLSSHARSH. Residues lysine 916, lysine 972, lysine 988, lysine 1000, and lysine 1021 each participate in a glycyl lysine isopeptide (Lys-Gly) (interchain with G-Cter in SUMO2) cross-link. Residues 1005–1072 are disordered; it reads FSAKGLTHPS…PLNLTSGPEP (68 aa). Serine 1029 is subject to Phosphoserine. Threonine 1031 carries the post-translational modification Phosphothreonine. Glycyl lysine isopeptide (Lys-Gly) (interchain with G-Cter in SUMO2) cross-links involve residues lysine 1033 and lysine 1038. Phosphoserine is present on residues serine 1039 and serine 1045. The segment covering 1040–1057 has biased composition (polar residues); that stretch reads PQLSLSPRPTSPKAQWPQ. A Phosphothreonine modification is found at threonine 1049. Serine 1050 and serine 1058 each carry phosphoserine. Residues 1063–1067 form an interaction with CTBP1 and CTBP2 1 region; it reads PLNLT. Residues 1076-1098 form a C2H2-type 7 zinc finger; that stretch reads IRCEFCGEFFENRKGLSSHARSH. Residue lysine 1089 forms a Glycyl lysine isopeptide (Lys-Gly) (interchain with G-Cter in SUMO2) linkage. Phosphoserine occurs at positions 1112 and 1139. Residues 1127-1208 are disordered; that stretch reads SRPGGHLHPP…GLATPSLPKK (82 aa). Residues lysine 1141 and lysine 1145 each participate in a glycyl lysine isopeptide (Lys-Gly) (interchain with G-Cter in SUMO2) cross-link. A phosphoserine mark is found at serine 1155, serine 1160, and serine 1167. Glycyl lysine isopeptide (Lys-Gly) (interchain with G-Cter in SUMO2) cross-links involve residues lysine 1171 and lysine 1172. 2 positions are modified to phosphoserine: serine 1179 and serine 1184. An N6,N6,N6-trimethyllysine; by EHMT2; alternate modification is found at lysine 1195. The residue at position 1195 (lysine 1195) is an N6,N6-dimethyllysine; by EHMT2; alternate. Lysine 1210 is covalently cross-linked (Glycyl lysine isopeptide (Lys-Gly) (interchain with G-Cter in SUMO2)). Residues 1247 to 1251 form an interaction with CTBP1 and CTBP2 2 region; it reads PLNLS. The C2H2-type 8 zinc finger occupies 1260–1282; the sequence is IRCEFCGEFFENRKGLSSHARSH. Lysine 1273 is covalently cross-linked (Glycyl lysine isopeptide (Lys-Gly) (interchain with G-Cter in SUMO2)). Residue serine 1296 is modified to Phosphoserine. Lysine 1315 is covalently cross-linked (Glycyl lysine isopeptide (Lys-Gly) (interchain with G-Cter in SUMO2)). The segment at 1320 to 1384 is disordered; sequence AGDLAPALTE…SKPSAASYLG (65 aa). Residues 1335 to 1351 are compositionally biased toward low complexity; sequence AAPGALHSPLPLSPLAS. 2 positions are modified to phosphoserine: serine 1342 and serine 1347. Residues lysine 1376, lysine 1389, lysine 1403, lysine 1405, and lysine 1415 each participate in a glycyl lysine isopeptide (Lys-Gly) (interchain with G-Cter in SUMO2) cross-link. A C2H2-type 9 zinc finger spans residues 1430-1452; that stretch reads ACCELCGLYFENRKALASHARAH. Residues lysine 1481, lysine 1497, and lysine 1510 each participate in a glycyl lysine isopeptide (Lys-Gly) (interchain with G-Cter in SUMO2) cross-link. 2 disordered regions span residues 1496–1587 and 1592–1611; these read TKKF…GEEV and QKLE…PSLV. Serine 1550 is modified (phosphoserine). Lysine 1556 participates in a covalent cross-link: Glycyl lysine isopeptide (Lys-Gly) (interchain with G-Cter in SUMO1); alternate. Lysine 1556 is covalently cross-linked (Glycyl lysine isopeptide (Lys-Gly) (interchain with G-Cter in SUMO2); alternate). Residues 1556–1574 are compositionally biased toward basic and acidic residues; sequence KSEEHQRQNINKFERRQAR. Residues lysine 1567 and lysine 1593 each participate in a glycyl lysine isopeptide (Lys-Gly) (interchain with G-Cter in SUMO2) cross-link. A compositionally biased stretch (pro residues) spans 1599–1611; it reads QPPPRVRPVPSLV. Residues 1629-1655 form a C2H2-type 10 zinc finger; the sequence is LKCRFCEVEFQGPLSIQEEWVRHLQRH. The tract at residues 1662–1684 is disordered; it reads SKADPPPEEPQAPQAQTAAVEAP. Lysine 1663 is covalently cross-linked (Glycyl lysine isopeptide (Lys-Gly) (interchain with G-Cter in SUMO2)). A compositionally biased stretch (low complexity) spans 1672 to 1684; that stretch reads QAPQAQTAAVEAP.

The protein belongs to the krueppel C2H2-type zinc-finger protein family. In terms of assembly, part of a complex containing at least CDYL, REST, WIZ, SETB1, EHMT1 and EHMT2. Interacts with EHMT1, EHMT2, CTBP1 and CTBP2. As to expression, according to PubMed:9795207, isoform L and isoform S are brain-specific. According to PubMed:16702210, isoform S is ubiquitously expressed.

The protein localises to the nucleus. Functionally, may link EHMT1 and EHMT2 histone methyltransferases to the CTBP corepressor machinery. May be involved in EHMT1-EHMT2 heterodimer formation and stabilization. This chain is Protein Wiz (Wiz), found in Mus musculus (Mouse).